The sequence spans 124 residues: Small ribosomal subunit protein uS12 (124 aa).

At aspartate 90 the chain carries 3-methylthioaspartic acid.

The protein belongs to the universal ribosomal protein uS12 family. Part of the 30S ribosomal subunit. Contacts proteins S8 and S17. May interact with IF1 in the 30S initiation complex.

In terms of biological role, with S4 and S5 plays an important role in translational accuracy. Functionally, interacts with and stabilizes bases of the 16S rRNA that are involved in tRNA selection in the A site and with the mRNA backbone. Located at the interface of the 30S and 50S subunits, it traverses the body of the 30S subunit contacting proteins on the other side and probably holding the rRNA structure together. The combined cluster of proteins S8, S12 and S17 appears to hold together the shoulder and platform of the 30S subunit. This chain is Small ribosomal subunit protein uS12, found in Wolbachia sp. subsp. Drosophila simulans (strain wRi).